The sequence spans 645 residues: tRNA 5-methylaminomethyl-2-thiouridine biosynthesis bifunctional protein MnmC (645 aa).

The segment at 1 to 230 (MPMSEPIDWL…KRHNLHAVFD (230 aa)) is tRNA (mnm(5)s(2)U34)-methyltransferase. Residues 254 to 645 (LGAGIAGAAA…LASERLGRRR (392 aa)) are FAD-dependent cmnm(5)s(2)U34 oxidoreductase.

The protein in the N-terminal section; belongs to the methyltransferase superfamily. tRNA (mnm(5)s(2)U34)-methyltransferase family. This sequence in the C-terminal section; belongs to the DAO family. FAD serves as cofactor.

It is found in the cytoplasm. The catalysed reaction is 5-aminomethyl-2-thiouridine(34) in tRNA + S-adenosyl-L-methionine = 5-methylaminomethyl-2-thiouridine(34) in tRNA + S-adenosyl-L-homocysteine + H(+). In terms of biological role, catalyzes the last two steps in the biosynthesis of 5-methylaminomethyl-2-thiouridine (mnm(5)s(2)U) at the wobble position (U34) in tRNA. Catalyzes the FAD-dependent demodification of cmnm(5)s(2)U34 to nm(5)s(2)U34, followed by the transfer of a methyl group from S-adenosyl-L-methionine to nm(5)s(2)U34, to form mnm(5)s(2)U34. The sequence is that of tRNA 5-methylaminomethyl-2-thiouridine biosynthesis bifunctional protein MnmC from Delftia acidovorans (strain DSM 14801 / SPH-1).